The chain runs to 842 residues: Leucine--tRNA ligase (842 aa).

Positions 44 to 55 match the 'HIGH' region motif; that stretch reads PYPSANGLHVGH. Positions 619–623 match the 'KMSKS' region motif; that stretch reads KMSKS. K622 contacts ATP.

Belongs to the class-I aminoacyl-tRNA synthetase family.

It localises to the cytoplasm. It carries out the reaction tRNA(Leu) + L-leucine + ATP = L-leucyl-tRNA(Leu) + AMP + diphosphate. This Borrelia recurrentis (strain A1) protein is Leucine--tRNA ligase.